The sequence spans 250 residues: UPF0259 membrane protein SG1383 (250 aa).

6 helical membrane-spanning segments follow: residues 20 to 40, 86 to 106, 121 to 141, 146 to 166, 191 to 211, and 219 to 239; these read FASILLLALLTALISVVLGHA, AGTLAGLVGNVLLAGGLLTMI, IGLSAPLLPRLLLLIFLTTLL, LLLIIVPGILLAIAFSLAPVI, LLAPAVLFWLLAKAAVLLLAT, and LVAVVLLNGLSNLISALLLIY.

This sequence belongs to the UPF0259 family.

The protein resides in the cell inner membrane. This is UPF0259 membrane protein SG1383 from Sodalis glossinidius (strain morsitans).